The chain runs to 298 residues: MRKTENTNDKSTALDEMNALDIVTLMNEEDHTVPRAITPCLPLIAEAAETIVSRFEQGGRVFTAGAGTSGRIAVLDAAELPPTFSIDESRWTGLIAGGYDAMWMPLEENEDDREKIVADLKAQSFSKDDVLIGVTASGSTPYVLGALSYAKQIGAASVSISCNADTEAGKLSDIAIEVQTGPEIIRGSTRLKAGTAQKMILNMLSTAAMVRLGRVYQNEMVNMRLLNQKLAGRAVTILMNTTGLSEDEALQALKESGNDIKAAIFMTLTNGTLEVARRCLSHENGHLKKAIQYHRKGF.

The 164-residue stretch at 51 to 214 (IVSRFEQGGR…STAAMVRLGR (164 aa)) folds into the SIS domain. Residue Glu79 is the Proton donor of the active site. The active site involves Glu110.

The protein belongs to the GCKR-like family. MurNAc-6-P etherase subfamily. As to quaternary structure, homodimer.

It catalyses the reaction N-acetyl-D-muramate 6-phosphate + H2O = N-acetyl-D-glucosamine 6-phosphate + (R)-lactate. It participates in amino-sugar metabolism; N-acetylmuramate degradation. Its function is as follows. Specifically catalyzes the cleavage of the D-lactyl ether substituent of MurNAc 6-phosphate, producing GlcNAc 6-phosphate and D-lactate. In Bacillus licheniformis (strain ATCC 14580 / DSM 13 / JCM 2505 / CCUG 7422 / NBRC 12200 / NCIMB 9375 / NCTC 10341 / NRRL NRS-1264 / Gibson 46), this protein is N-acetylmuramic acid 6-phosphate etherase 2.